The sequence spans 324 residues: Pepsin-2B (324 aa).

Residues 14-321 (YYGVISIGTP…DRTNNKVGFA (308 aa)) form the Peptidase A1 domain. The active site involves Asp-32. An intrachain disulfide couples Cys-45 to Cys-50. Positions 86-109 (QDTVSVGGGSDPNQELGESQTEPG) are disordered. Over residues 96 to 107 (DPNQELGESQTE) the composition is skewed to polar residues. Cys-206 and Cys-209 are disulfide-bonded. Asp-214 is a catalytic residue. An intrachain disulfide couples Cys-247 to Cys-280.

It belongs to the peptidase A1 family.

The sequence is that of Pepsin-2B from Gadus morhua (Atlantic cod).